A 415-amino-acid chain; its full sequence is Alditol oxidase (415 aa).

The FAD-binding PCMH-type domain maps to 12-179 (ITYTAKEVHR…TALTLDLEPA (168 aa)). Pros-8alpha-FAD histidine is present on His46. Residues Ser106, Ser111, Gly114, 118–121 (TGTH), and Val169 each bind FAD. Ser106 contributes to the xylitol binding site. Xylitol is bound by residues Glu317, Arg319, and Thr342. Arg319 contacts FAD. His369 is an FAD binding site. Lys372 lines the xylitol pocket.

The protein belongs to the oxygen-dependent FAD-linked oxidoreductase family. Monomer. FAD is required as a cofactor.

It carries out the reaction an alditol + O2 = an aldose + H2O2. The enzyme catalyses xylitol + O2 = D-xylose + H2O2. It catalyses the reaction D-sorbitol + O2 = D-glucose + H2O2. Its function is as follows. Oxidase that performs selective oxidation of the terminal primary hydroxyl group of several alditols, with a reduction of O2 to H2O2. Shows highest activity on xylitol and D-sorbitol, and to a lesser extent, can also use galactitol, D-mannitol, and D-arabitol as substrates in vitro. Is not active on D-glucose, D-xylose, D-galactose, D-mannose, D-fructose, L-sorbose, L-fucose, myoinositol, glycerol, ethyl alcohol, and meso-erythritol. This is Alditol oxidase from Streptomyces sp. (strain IKD472 / FERM P-14339).